A 244-amino-acid chain; its full sequence is EEF1A lysine methyltransferase 2 (244 aa).

The tract at residues 1 to 27 (MNADAEGHSGAVVPAQSPEGSSAADDF) is disordered. Ser21 is subject to Phosphoserine.

Belongs to the class I-like SAM-binding methyltransferase superfamily. EFM4 family.

The protein localises to the cytoplasm. Its subcellular location is the nucleus. The catalysed reaction is L-lysyl-[protein] + 3 S-adenosyl-L-methionine = N(6),N(6),N(6)-trimethyl-L-lysyl-[protein] + 3 S-adenosyl-L-homocysteine + 3 H(+). Protein-lysine methyltransferase that selectively catalyzes the trimethylation of EEF1A at 'Lys-318'. The polypeptide is EEF1A lysine methyltransferase 2 (Mus musculus (Mouse)).